We begin with the raw amino-acid sequence, 157 residues long: Cyclic pyranopterin monophosphate synthase (157 aa).

Substrate is bound by residues 73–75 and 110–111; these read LCH and ME. The active site involves Asp125.

It belongs to the MoaC family. In terms of assembly, homohexamer; trimer of dimers.

The catalysed reaction is (8S)-3',8-cyclo-7,8-dihydroguanosine 5'-triphosphate = cyclic pyranopterin phosphate + diphosphate. Its pathway is cofactor biosynthesis; molybdopterin biosynthesis. Functionally, catalyzes the conversion of (8S)-3',8-cyclo-7,8-dihydroguanosine 5'-triphosphate to cyclic pyranopterin monophosphate (cPMP). This Pseudomonas fluorescens (strain SBW25) protein is Cyclic pyranopterin monophosphate synthase.